We begin with the raw amino-acid sequence, 155 residues long: Ribonuclease H (155 aa).

The RNase H type-1 domain occupies 4 to 146 (NIDVVEIYTD…CDRLATEQIK (143 aa)). The Mg(2+) site is built by Asp13, Glu51, Asp73, and Asp138.

This sequence belongs to the RNase H family. As to quaternary structure, monomer. Mg(2+) serves as cofactor.

The protein resides in the cytoplasm. The enzyme catalyses Endonucleolytic cleavage to 5'-phosphomonoester.. In terms of biological role, endonuclease that specifically degrades the RNA of RNA-DNA hybrids. This Thermoanaerobacter pseudethanolicus (strain ATCC 33223 / 39E) (Clostridium thermohydrosulfuricum) protein is Ribonuclease H.